We begin with the raw amino-acid sequence, 267 residues long: Mediator of RNA polymerase II transcription subunit 8 (267 aa).

Coiled coils occupy residues 1–26 (MQREEKQLEACLDALISQVSDIKNSL) and 116–160 (DVEE…EERE). The tract at residues 190–267 (GLSNRRPPGQ…KSASMHPYQR (78 aa)) is disordered. Residues 227 to 245 (PPNQQQQHMAGVSMSQGSQ) show a composition bias toward polar residues.

The protein belongs to the Mediator complex subunit 8 family. In terms of assembly, component of the Mediator complex. May be part of a multisubunit E3 ubiquitin-protein ligase complex.

The protein localises to the nucleus. It functions in the pathway protein modification; protein ubiquitination. Functionally, component of the Mediator complex, a coactivator involved in the regulated transcription of nearly all RNA polymerase II-dependent genes. Mediator functions as a bridge to convey information from gene-specific regulatory proteins to the basal RNA polymerase II transcription machinery. Mediator is recruited to promoters by direct interactions with regulatory proteins and serves as a scaffold for the assembly of a functional preinitiation complex with RNA polymerase II and the general transcription factors. May play a role as a target recruitment subunit in E3 ubiquitin-protein ligase complexes and thus in ubiquitination and subsequent proteasomal degradation of target proteins. This Xenopus tropicalis (Western clawed frog) protein is Mediator of RNA polymerase II transcription subunit 8 (med8).